Reading from the N-terminus, the 375-residue chain is Outer membrane porin C (375 aa).

The N-terminal stretch at 1 to 21 (MKVKVLSLLVPALLVAGAANA) is a signal peptide. Residues 22-33 (AEVYNKDGNKLD) are Periplasmic-facing. A beta stranded transmembrane segment spans residues 34 to 42 (LYGKVDGLH). Residues 43-53 (YFSDDKSVDGD) are Extracellular-facing. The chain crosses the membrane as a beta stranded span at residues 54-63 (QTYMRLGFKG). Over 64-73 (ETQVTDQLTG) the chain is Periplasmic. Residues 74–84 (YGQWEYQIQGN) form a beta stranded membrane-spanning segment. The Extracellular segment spans residues 85 to 91 (APESENN). A beta stranded transmembrane segment spans residues 92 to 101 (SWTRVAFAGL). Residues 102 to 106 (KFQDI) lie on the Periplasmic side of the membrane. Residues 107-115 (GSFDYGRNY) traverse the membrane as a beta stranded segment. Residues 116-141 (GVVYDVTSWTDVLPEFGGDTYGSDNF) lie on the Extracellular side of the membrane. Residues 142–154 (MQQRGNGFATYRN) traverse the membrane as a beta stranded segment. Residues 155–163 (TDFFGLVDG) lie on the Periplasmic side of the membrane. Residues 164 to 171 (LNFAVQYQ) form a beta stranded membrane-spanning segment. At 172–204 (GQNGSVSGENDPDFTGHGITNNGRKALRQNGDG) the chain is on the extracellular side. The beta stranded transmembrane segment at 205–211 (VGGSITY) threads the bilayer. Residues 212 to 215 (DYEG) are Periplasmic-facing. Residues 216 to 223 (FGVGAAVS) traverse the membrane as a beta stranded segment. Residues 224-245 (SSKRTDAQNTAAYIGNGDRAET) lie on the Extracellular side of the membrane. The chain crosses the membrane as a beta stranded span at residues 246–252 (YTGGLKY). The Periplasmic portion of the chain corresponds to 253–256 (DANN). A beta stranded transmembrane segment spans residues 257-264 (IYLAAQYT). Residues 265-273 (QTYNATRVG) lie on the Extracellular side of the membrane. Residues 274–290 (SLGWANKAQNFEAVAQY) traverse the membrane as a beta stranded segment. Residues 291–295 (QFDFG) are Periplasmic-facing. Residues 296–303 (LRPSVAYL) form a beta stranded membrane-spanning segment. The Extracellular segment spans residues 304–326 (QSKGKNLGTIGTRNYDDEDILKY). A beta stranded transmembrane segment spans residues 327 to 334 (VDVGATYY). Residues 335 to 338 (FNKN) lie on the Periplasmic side of the membrane. Residues 339–346 (MSTYVDYK) form a beta stranded membrane-spanning segment. Residues 347–366 (INLLDDNQFTRDAGINTDNI) are Extracellular-facing. The beta stranded transmembrane segment at 367–374 (VALGLVYQ) threads the bilayer. Residue Phe-375 is a topological domain, periplasmic.

It belongs to the Gram-negative porin family. As to quaternary structure, homotrimer. Forms mixed heterotrimers with OmpF; other mixed heterotrimers are also probable.

It is found in the cell outer membrane. Its function is as follows. Forms pores that allow passive diffusion of small molecules across the outer membrane. Functionally, (Microbial infection) Supports colicin E5 entry in the absence of its major receptor OmpF. In terms of biological role, (Microbial infection) A mixed OmpC-OmpF heterotrimer is the outer membrane receptor for toxin CdiA-EC536. The sequence is that of Outer membrane porin C (ompC) from Escherichia coli O6:K15:H31 (strain 536 / UPEC).